The sequence spans 1032 residues: Caspase recruitment domain-containing protein 10 (1032 aa).

Disordered stretches follow at residues 1 to 23, 253 to 276, and 481 to 553; these read MPGR…SEAE, RARG…EPDN, and EFPS…MSDI. S18 is modified (phosphoserine). The CARD domain occupies 23 to 115; it reads EEDALWERIE…EHFTLLTGQE (93 aa). Residues 138–456 are a coiled coil; the sequence is TEVRRLREAR…LEVQLQRAQG (319 aa). 2 stretches are compositionally biased toward basic and acidic residues: residues 261-276 and 504-517; these read AEEK…EPDN and HNSE…KEIN.

In terms of assembly, CARD10 and BCL10 bind to each other by CARD-CARD interaction. They both participate in a complex with MALT1, where MALT1 binds to BCL10. Interacts with TMEM43; this interaction is essential for EGFR-mediated NF-kappa-B activation. As to expression, detected in adult heart, kidney and liver; lower levels in intestine, placenta, muscle and lung. Also found in fetal lung, liver and kidney.

It is found in the cytoplasm. Functionally, scaffold protein that plays an important role in mediating the activation of NF-kappa-B via BCL10 or EGFR. In Homo sapiens (Human), this protein is Caspase recruitment domain-containing protein 10 (CARD10).